Reading from the N-terminus, the 182-residue chain is Nudix hydrolase 17, mitochondrial (182 aa).

Residues 1–26 (MGVEKMVCLASRTGRQFQRYNKGRRQ) constitute a mitochondrion transit peptide. Residues 27–158 (VVGCVPYRFK…WMKEALDVLV (132 aa)) enclose the Nudix hydrolase domain. The Nudix box signature appears at 65 to 86 (GGWELDESVEEAASRECLEEAG). Positions 80 and 84 each coordinate Mg(2+).

The protein belongs to the Nudix hydrolase family. Requires Mg(2+) as cofactor. Mn(2+) is required as a cofactor. Expressed in roots, leaves, stems and inflorescences.

It is found in the mitochondrion. Its function is as follows. Probably mediates the hydrolysis of some nucleoside diphosphate derivatives. The protein is Nudix hydrolase 17, mitochondrial (NUDT17) of Arabidopsis thaliana (Mouse-ear cress).